We begin with the raw amino-acid sequence, 301 residues long: MGQTSKHKSGFVALVGRPNVGKSTLMNRLIGQKVAITSAKPQTTRNKISGIYTEDDMQVVFVDTPGIFKSHSDLDEYMDKASLSSLKDVDLVMFMVDAKEAGKGEEYVAGLLKDLDIPVFLVINKIDQVHPNELLPIIDSYQAVGKFAEFLPISARQGNGVDDLLKTLKDYLPEGPQYYASDEITDRPEYFVVAEMIREQILRLTDQEVPHSTAVWVDQMNQRINGKLQIDATIFVEKDGQKRIIIGQRGSMIKQIGMRSRKEIENLLGEKVNLKLWVKVRRDWRQDPAFLKSIGYDKKEL.

One can recognise an Era-type G domain in the interval 8–174; sequence KSGFVALVGR…LKTLKDYLPE (167 aa). Positions 16–23 are G1; that stretch reads GRPNVGKS. 16 to 23 provides a ligand contact to GTP; that stretch reads GRPNVGKS. Residues 42–46 are G2; the sequence is QTTRN. Residues 63–66 are G3; the sequence is DTPG. GTP-binding positions include 63-67 and 124-127; these read DTPGI and NKID. The G4 stretch occupies residues 124 to 127; sequence NKID. The tract at residues 153–155 is G5; the sequence is ISA. The KH type-2 domain occupies 197-282; sequence IREQILRLTD…NLKLWVKVRR (86 aa).

This sequence belongs to the TRAFAC class TrmE-Era-EngA-EngB-Septin-like GTPase superfamily. Era GTPase family. Monomer.

The protein resides in the cytoplasm. The protein localises to the cell membrane. An essential GTPase that binds both GDP and GTP, with rapid nucleotide exchange. Plays a role in 16S rRNA processing and 30S ribosomal subunit biogenesis and possibly also in cell cycle regulation and energy metabolism. This chain is GTPase Era, found in Lactobacillus delbrueckii subsp. bulgaricus (strain ATCC 11842 / DSM 20081 / BCRC 10696 / JCM 1002 / NBRC 13953 / NCIMB 11778 / NCTC 12712 / WDCM 00102 / Lb 14).